Reading from the N-terminus, the 484-residue chain is Ornithine decarboxylase (484 aa).

Lys-114 bears the N6-(pyridoxal phosphate)lysine mark. Pyridoxal 5'-phosphate contacts are provided by residues Ser-245, Gly-282, and 315–318; that span reads EPGR. Position 381 to 382 (381 to 382) interacts with substrate; sequence FD. Cys-422 (proton donor; shared with dimeric partner) is an active-site residue. Substrate is bound at residue Asp-423. Residue Tyr-452 coordinates pyridoxal 5'-phosphate.

Belongs to the Orn/Lys/Arg decarboxylase class-II family. Homodimer. Only the dimer is catalytically active, as the active sites are constructed of residues from both monomers. Requires pyridoxal 5'-phosphate as cofactor.

The protein resides in the cytoplasm. It carries out the reaction L-ornithine + H(+) = putrescine + CO2. It functions in the pathway amine and polyamine biosynthesis; putrescine biosynthesis via L-ornithine pathway; putrescine from L-ornithine: step 1/1. Inhibited by antizyme (AZ) OAZ1 in response to polyamine levels. AZ inhibits the assembly of the functional homodimer by binding to ODC monomers and targeting them for ubiquitin-independent proteolytic destruction by the 26S proteasome. In terms of biological role, catalyzes the first and rate-limiting step of polyamine biosynthesis that converts ornithine into putrescine, which is the precursor for the polyamines, spermidine and spermine. Polyamines are essential for cell proliferation and are implicated in cellular processes, ranging from DNA replication to apoptosis. The polypeptide is Ornithine decarboxylase (spe-1) (Neurospora crassa (strain ATCC 24698 / 74-OR23-1A / CBS 708.71 / DSM 1257 / FGSC 987)).